The sequence spans 229 residues: Urease accessory protein UreF (229 aa).

Belongs to the UreF family. UreD, UreF and UreG form a complex that acts as a GTP-hydrolysis-dependent molecular chaperone, activating the urease apoprotein by helping to assemble the nickel containing metallocenter of UreC. The UreE protein probably delivers the nickel.

Its subcellular location is the cytoplasm. In terms of biological role, required for maturation of urease via the functional incorporation of the urease nickel metallocenter. The sequence is that of Urease accessory protein UreF from Staphylococcus epidermidis (strain ATCC 35984 / DSM 28319 / BCRC 17069 / CCUG 31568 / BM 3577 / RP62A).